The primary structure comprises 101 residues: Small ribosomal subunit protein uS14 (101 aa).

Belongs to the universal ribosomal protein uS14 family. As to quaternary structure, part of the 30S ribosomal subunit. Contacts proteins S3 and S10.

Its function is as follows. Binds 16S rRNA, required for the assembly of 30S particles and may also be responsible for determining the conformation of the 16S rRNA at the A site. This is Small ribosomal subunit protein uS14 from Shewanella baltica (strain OS155 / ATCC BAA-1091).